The following is a 232-amino-acid chain: Large ribosomal subunit protein uL1 (232 aa).

This sequence belongs to the universal ribosomal protein uL1 family. In terms of assembly, part of the 50S ribosomal subunit.

Binds directly to 23S rRNA. The L1 stalk is quite mobile in the ribosome, and is involved in E site tRNA release. In terms of biological role, protein L1 is also a translational repressor protein, it controls the translation of the L11 operon by binding to its mRNA. The polypeptide is Large ribosomal subunit protein uL1 (Amoebophilus asiaticus (strain 5a2)).